The following is an 806-amino-acid chain: Phenylalanine--tRNA ligase beta subunit (806 aa).

A tRNA-binding domain is found at 40–155 (NKGVKGVVVG…SDAEVGADAL (116 aa)). The region spanning 409-484 (VQERTVSVTA…RLYGYDHIPV (76 aa)) is the B5 domain. The Mg(2+) site is built by Asp462, Asp468, Glu471, and Glu472. In terms of domain architecture, FDX-ACB spans 712 to 805 (PRFPSMTRDM…VEEKFGAELR (94 aa)).

The protein belongs to the phenylalanyl-tRNA synthetase beta subunit family. Type 1 subfamily. In terms of assembly, tetramer of two alpha and two beta subunits. Mg(2+) serves as cofactor.

It is found in the cytoplasm. It catalyses the reaction tRNA(Phe) + L-phenylalanine + ATP = L-phenylalanyl-tRNA(Phe) + AMP + diphosphate + H(+). The protein is Phenylalanine--tRNA ligase beta subunit of Bacillus thuringiensis subsp. konkukian (strain 97-27).